The chain runs to 238 residues: Orotidine 5'-phosphate decarboxylase (238 aa).

Substrate is bound by residues D10, K32, 59-68, T122, R184, Q193, G213, and R214; that span reads DLKLHDIPNT. The active-site Proton donor is K61.

This sequence belongs to the OMP decarboxylase family. Type 1 subfamily. As to quaternary structure, homodimer.

It catalyses the reaction orotidine 5'-phosphate + H(+) = UMP + CO2. It participates in pyrimidine metabolism; UMP biosynthesis via de novo pathway; UMP from orotate: step 2/2. In terms of biological role, catalyzes the decarboxylation of orotidine 5'-monophosphate (OMP) to uridine 5'-monophosphate (UMP). The polypeptide is Orotidine 5'-phosphate decarboxylase (Bacillus cereus (strain AH187)).